Reading from the N-terminus, the 508-residue chain is MKLAYWMYAGPAHIGTLRIASSFKNVHAIMHAPLGDDYFNVMRSMLERERNFTPVTASIVDRNVLARGSQEKVVDNIVRKDQEERPDLIVLTPTCTSSILQEDLENFVARAQLDAQGDVILADVNHYRVNELQAGDRTLQQIVQFYINKARKKGDLATEKTPQPSVNIIGISTLGFHNNHDIRELKTLMAELGISVNLVIPDKASVHDLKKLPQAWFNLVPYRELGLPTAKYLEQEFDQPYVDITPMGVVETARCIRAIQGAINDQGATADYEAFIEEQTLHVSQAAWFSRSIDCQNLTGKKAIVFGDNTHAVAMTKILAREMGIHVVLAGTYCKYDADWFRQEVSEYCDEILISEDHGEIADAIARLEPAAIFGTQMERHVGKRLNIPCGVIAAPIHIQNFPIGYRPFVGYEGTNQIADLVYNSFTLGMEDHLLEIFGGHDTKEVITTTMSASSDLNWTTEAQGQLNKVPGFVRGKVKRNTEKYARAQGLSEISLEVLYAAKESVGA.

Residue Asp-36 participates in [4Fe-4S] cluster binding. The Proton donor role is filled by Asp-294. Residue 429 to 430 coordinates substrate; that stretch reads GM.

This sequence belongs to the ChlB/BchB/BchZ family. In terms of assembly, protochlorophyllide reductase is composed of three subunits; ChlL, ChlN and ChlB. Forms a heterotetramer of two ChlB and two ChlN subunits. The cofactor is [4Fe-4S] cluster.

The catalysed reaction is chlorophyllide a + oxidized 2[4Fe-4S]-[ferredoxin] + 2 ADP + 2 phosphate = protochlorophyllide a + reduced 2[4Fe-4S]-[ferredoxin] + 2 ATP + 2 H2O. It functions in the pathway porphyrin-containing compound metabolism; chlorophyll biosynthesis (light-independent). Component of the dark-operative protochlorophyllide reductase (DPOR) that uses Mg-ATP and reduced ferredoxin to reduce ring D of protochlorophyllide (Pchlide) to form chlorophyllide a (Chlide). This reaction is light-independent. The NB-protein (ChlN-ChlB) is the catalytic component of the complex. The polypeptide is Light-independent protochlorophyllide reductase subunit B (Picosynechococcus sp. (strain ATCC 27264 / PCC 7002 / PR-6) (Agmenellum quadruplicatum)).